Consider the following 541-residue polypeptide: Phosphoenolpyruvate carboxykinase (ATP) (541 aa).

Residue 243–250 (GLSGTGKT) coordinates ATP.

Belongs to the phosphoenolpyruvate carboxykinase (ATP) family.

It catalyses the reaction oxaloacetate + ATP = phosphoenolpyruvate + ADP + CO2. It participates in carbohydrate biosynthesis; gluconeogenesis. This Eremothecium gossypii (strain ATCC 10895 / CBS 109.51 / FGSC 9923 / NRRL Y-1056) (Yeast) protein is Phosphoenolpyruvate carboxykinase (ATP) (PCK1).